A 448-amino-acid chain; its full sequence is MREIIHLQTGQCLIQGNQVGTAFWQTIHHEHGLDHDGYFRGESTQQSDRLSVYFAEASNNKYVPRAVLVDLEPATMDAIRSGPLGNFFRPDNMVHGQSGAGNNWAKGHYTEGAELVDQVLDVVRREAETCDSLQGFQITHSLGGGTGSGMGTLLIAKVREEFPDRMMATFSVLPSPKVSEVVVEPYNATLSVHQLVENSDETFCIDNEALYDICRRTLKQAHPSYGDLNKLVSRVMSGLTTGFRFPGQLNADLRKLAVNLVPFPRLHFFTVGFAPLTTAAAYQNLGVAELTQQMFDPKNVMSASDFRNGRFLTCSAIYRGKVSTKQIEEQIRGVQAKNSAYFVEWIPNNVQTAHCSIPPVGMNASSTFIGNSTAIQDIFRRVGDQFSVMFRRKAFLHWYTGEGMDEMEFTEAESNMNDLVSEYQQYQDAGMDDDEAEEAYEEEEPVEE.

The GTP site is built by Q11, E72, S141, G145, T146, G147, N207, and N229. Residue E72 participates in Mg(2+) binding. The tract at residues 424-448 is disordered; sequence QQYQDAGMDDDEAEEAYEEEEPVEE. The segment covering 430 to 448 has biased composition (acidic residues); sequence GMDDDEAEEAYEEEEPVEE.

This sequence belongs to the tubulin family. As to quaternary structure, dimer of alpha and beta chains. A typical microtubule is a hollow water-filled tube with an outer diameter of 25 nm and an inner diameter of 15 nM. Alpha-beta heterodimers associate head-to-tail to form protofilaments running lengthwise along the microtubule wall with the beta-tubulin subunit facing the microtubule plus end conferring a structural polarity. Microtubules usually have 13 protofilaments but different protofilament numbers can be found in some organisms and specialized cells. Requires Mg(2+) as cofactor.

The protein resides in the cytoplasm. The protein localises to the cytoskeleton. In terms of biological role, tubulin is the major constituent of microtubules, a cylinder consisting of laterally associated linear protofilaments composed of alpha- and beta-tubulin heterodimers. Microtubules grow by the addition of GTP-tubulin dimers to the microtubule end, where a stabilizing cap forms. Below the cap, tubulin dimers are in GDP-bound state, owing to GTPase activity of alpha-tubulin. In Colletotrichum gloeosporioides (Anthracnose fungus), this protein is Tubulin beta-1 chain (TUB1).